The primary structure comprises 71 residues: METIYDEIEIEDFTFDPVTQLFQYPCPCGDRFAVSIDDLNDGEDIAVCPSCSLMVKVIFEPEDLQEYYDEI.

In terms of domain architecture, DPH-type MB spans 4–60 (IYDEIEIEDFTFDPVTQLFQYPCPCGDRFAVSIDDLNDGEDIAVCPSCSLMVKVIFE). Fe cation contacts are provided by C26, C28, C48, and C51.

The protein belongs to the DPH3 family. Component of the 2-(3-amino-3-carboxypropyl)histidine synthase complex composed of DPH1, DPH2, DPH3 and a NADH-dependent reductase, predominantly CBR1. Requires Fe(2+) as cofactor.

It localises to the cytoplasm. The protein localises to the nucleus. The enzyme catalyses [3Fe-4S](1+)-[protein] + Fe(2+)-[Dph3] = [3Fe-4S](0)-[protein] + Fe(3+)-[Dph3]. It carries out the reaction 2 [3Fe-4S](0)-[protein] + 2 Fe(2+)-[Dph3] + NADH = 2 [4Fe-4S](1+)-[protein] + 2 [Dph3] + NAD(+) + H(+). It functions in the pathway protein modification; peptidyl-diphthamide biosynthesis. Required for the first step of diphthamide biosynthesis, a post-translational modification of histidine which occurs in elongation factor 2. DPH1 and DPH2 transfer a 3-amino-3-carboxypropyl (ACP) group from S-adenosyl-L-methionine (SAM) to a histidine residue, the reaction is assisted by a reduction system comprising KTI11/DPH3 and a NADH-dependent reductase, predominantly CBR1. Acts as an electron donor to reduce the Fe-S cluster in DPH1-DPH2 keeping the [4Fe-4S] clusters in the active and reduced state. Restores iron to DPH1-DPH2 iron-sulfur clusters which have degraded from [4Fe-4S] to [3Fe-4S] by donating an iron atom to reform [4Fe-4S] clusters, in a manner dependent on the presence of elongation factor 2 and SAM. Associates with the elongator complex and is required for tRNA Wobble base modifications mediated by the elongator complex. The elongator complex is required for multiple tRNA modifications, including mcm5U (5-methoxycarbonylmethyl uridine), mcm5s 2U (5-methoxycarbonylmethyl-2-thiouridine), and ncm5U (5-carbamoylmethyl uridine). The protein is Diphthamide biosynthesis protein 3 (DPH3) of Debaryomyces hansenii (strain ATCC 36239 / CBS 767 / BCRC 21394 / JCM 1990 / NBRC 0083 / IGC 2968) (Yeast).